Consider the following 75-residue polypeptide: Disintegrin CTF-II (75 aa).

Residues 1–75 (ELLEEGEDCY…SDDCPRWNDL (75 aa)) enclose the Disintegrin domain. Disulfide bonds link cysteine 9-cysteine 24, cysteine 11-cysteine 19, cysteine 18-cysteine 41, cysteine 32-cysteine 38, cysteine 37-cysteine 62, and cysteine 50-cysteine 69. Positions 54 to 56 (RGD) match the Cell attachment site motif.

The protein belongs to the venom metalloproteinase (M12B) family. P-II subfamily. P-IIa sub-subfamily. Monomer (disintegrin). As to expression, expressed by the venom gland.

It is found in the secreted. Functionally, inhibits fibrinogen interaction with platelet receptors, and inhibits aggregation induced by ADP, thrombin, collagen and platelet-activating factor. Acts by binding to the alpha-IIb/beta-3 (ITGA2B/ITGB3) on the platelet surface. In Protobothrops flavoviridis (Habu), this protein is Disintegrin CTF-II.